Reading from the N-terminus, the 157-residue chain is S-ribosylhomocysteine lyase (157 aa).

Positions 54, 58, and 124 each coordinate Fe cation.

Belongs to the LuxS family. Homodimer. Fe cation serves as cofactor.

It carries out the reaction S-(5-deoxy-D-ribos-5-yl)-L-homocysteine = (S)-4,5-dihydroxypentane-2,3-dione + L-homocysteine. In terms of biological role, involved in the synthesis of autoinducer 2 (AI-2) which is secreted by bacteria and is used to communicate both the cell density and the metabolic potential of the environment. The regulation of gene expression in response to changes in cell density is called quorum sensing. Catalyzes the transformation of S-ribosylhomocysteine (RHC) to homocysteine (HC) and 4,5-dihydroxy-2,3-pentadione (DPD). This Levilactobacillus brevis (strain ATCC 367 / BCRC 12310 / CIP 105137 / JCM 1170 / LMG 11437 / NCIMB 947 / NCTC 947) (Lactobacillus brevis) protein is S-ribosylhomocysteine lyase.